Reading from the N-terminus, the 385-residue chain is Chorismate synthase (385 aa).

The disordered stretch occupies residues 43 to 63 (PDLDRRRPGTSRHVTQRNEPD). Positions 48 and 54 each coordinate NADP(+). Residues 125–127 (RSS), 238–239 (NA), glycine 278, 293–297 (KPTSS), and arginine 319 each bind FMN. Positions 363–372 (AQAPRTETAP) are enriched in low complexity. The tract at residues 363 to 385 (AQAPRTETAPATPPLDAGDDIEA) is disordered.

The protein belongs to the chorismate synthase family. In terms of assembly, homotetramer. FMNH2 is required as a cofactor.

The enzyme catalyses 5-O-(1-carboxyvinyl)-3-phosphoshikimate = chorismate + phosphate. Its pathway is metabolic intermediate biosynthesis; chorismate biosynthesis; chorismate from D-erythrose 4-phosphate and phosphoenolpyruvate: step 7/7. In terms of biological role, catalyzes the anti-1,4-elimination of the C-3 phosphate and the C-6 proR hydrogen from 5-enolpyruvylshikimate-3-phosphate (EPSP) to yield chorismate, which is the branch point compound that serves as the starting substrate for the three terminal pathways of aromatic amino acid biosynthesis. This reaction introduces a second double bond into the aromatic ring system. This chain is Chorismate synthase, found in Leptothrix cholodnii (strain ATCC 51168 / LMG 8142 / SP-6) (Leptothrix discophora (strain SP-6)).